The sequence spans 274 residues: Cytochrome b-c1 complex subunit Rieske, mitochondrial (274 aa).

Over 79-103 (SHTDVKVPDFYDYRRLEVLDSTKSS) the chain is Mitochondrial matrix. A helical transmembrane segment spans residues 104–140 (RESSEARKGFSYLVTAVTTVGVAYAAKNAVTQFISSM). Topologically, residues 141-274 (SASADVLAMA…FTSDDMVVVG (134 aa)) are mitochondrial intermembrane. Positions 187 to 272 (EAAVELSQLR…YEFTSDDMVV (86 aa)) constitute a Rieske domain. [2Fe-2S] cluster is bound by residues Cys-217, His-219, Cys-236, His-239, and Ser-241. Cys-222 and Cys-238 are joined by a disulfide.

Belongs to the Rieske iron-sulfur protein family. As to quaternary structure, component of the ubiquinol-cytochrome c oxidoreductase (cytochrome b-c1 complex, complex III, CIII), a multisubunit enzyme composed of 11 subunits. The complex is composed of 3 respiratory subunits cytochrome b, cytochrome c1 and Rieske protein UQCRFS1, 2 core protein subunits UQCRC1/QCR1 and UQCRC2/QCR2, and 6 low-molecular weight protein subunits UQCRH/QCR6, UQCRB/QCR7, UQCRQ/QCR8, UQCR10/QCR9, UQCR11/QCR10 and subunit 9, the cleavage product of Rieske protein UQCRFS1. The complex exists as an obligatory dimer and forms supercomplexes (SCs) in the inner mitochondrial membrane with NADH-ubiquinone oxidoreductase (complex I, CI) and cytochrome c oxidase (complex IV, CIV), resulting in different assemblies (supercomplex SCI(1)III(2)IV(1) and megacomplex MCI(2)III(2)IV(2)). Incorporation of the Rieske protein UQCRFS1 is the penultimate step in complex III assembly. Interacts with TTC19, which is involved in the clearance of UQCRFS1 fragments. In terms of assembly, component of the ubiquinol-cytochrome c oxidoreductase (cytochrome b-c1 complex, complex III, CIII). Subunit 9 corresponds to the mitochondrial targeting sequence (MTS) of Rieske protein UQCRFS1. It is retained after processing and incorporated inside complex III, where it remains bound to the complex and localizes between the 2 core subunits UQCRC1/QCR1 and UQCRC2/QCR2. The cofactor is [2Fe-2S] cluster. Proteolytic processing is necessary for the correct insertion of UQCRFS1 in the complex III dimer. Several fragments are generated during UQCRFS1 insertion, most probably due to the endogenous matrix-processing peptidase (MPP) activity of the 2 core protein subunits UQCRC1/QCR1 and UQCRC2/QCR2, which are homologous to the 2 mitochondrial-processing peptidase (MPP) subunits beta-MPP and alpha-MPP respectively. The action of the protease is also necessary for the clearance of the UQCRFS1 fragments.

The protein localises to the mitochondrion inner membrane. The enzyme catalyses a quinol + 2 Fe(III)-[cytochrome c](out) = a quinone + 2 Fe(II)-[cytochrome c](out) + 2 H(+)(out). Functionally, component of the ubiquinol-cytochrome c oxidoreductase, a multisubunit transmembrane complex that is part of the mitochondrial electron transport chain which drives oxidative phosphorylation. The respiratory chain contains 3 multisubunit complexes succinate dehydrogenase (complex II, CII), ubiquinol-cytochrome c oxidoreductase (cytochrome b-c1 complex, complex III, CIII) and cytochrome c oxidase (complex IV, CIV), that cooperate to transfer electrons derived from NADH and succinate to molecular oxygen, creating an electrochemical gradient over the inner membrane that drives transmembrane transport and the ATP synthase. The cytochrome b-c1 complex catalyzes electron transfer from ubiquinol to cytochrome c, linking this redox reaction to translocation of protons across the mitochondrial inner membrane, with protons being carried across the membrane as hydrogens on the quinol. In the process called Q cycle, 2 protons are consumed from the matrix, 4 protons are released into the intermembrane space and 2 electrons are passed to cytochrome c. The Rieske protein is a catalytic core subunit containing a [2Fe-2S] iron-sulfur cluster. It cycles between 2 conformational states during catalysis to transfer electrons from the quinol bound in the Q(0) site in cytochrome b to cytochrome c1. Incorporation of UQCRFS1 is the penultimate step in complex III assembly. In terms of biological role, component of the ubiquinol-cytochrome c oxidoreductase (cytochrome b-c1 complex, complex III, CIII). UQCRFS1 undergoes proteolytic processing once it is incorporated in the complex III dimer. One of the fragments, called subunit 9, corresponds to its mitochondrial targeting sequence (MTS). The proteolytic processing is necessary for the correct insertion of UQCRFS1 in the complex III dimer, but the persistence of UQCRFS1-derived fragments may prevent newly imported UQCRFS1 to be processed and assembled into complex III and is detrimental for the complex III structure and function. The sequence is that of Cytochrome b-c1 complex subunit Rieske, mitochondrial (UQCRFS1) from Theropithecus gelada (Gelada baboon).